The sequence spans 440 residues: Transposon Ty1-LR2 Gag polyprotein (440 aa).

3 stretches are compositionally biased toward polar residues: residues 1 to 23, 48 to 60, and 127 to 152; these read MESQQLSQHSPISHGSACASVTS, TKANSQQTTTPAS, and QSQFPQYPSSVGTPLSTPSPESGNTF. Disordered stretches follow at residues 1-93, 126-174, and 352-440; these read MESQ…MMTQ, PQSQ…PPPM, and GSRN…PGTY. Residues 153–165 are compositionally biased toward low complexity; that stretch reads TDSSSADSDMTST. The RNA-binding stretch occupies residues 299 to 401; that stretch reads NNGIHINNKV…NSKSKTARAH (103 aa). Positions 402-418 are enriched in low complexity; that stretch reads NVSTSNNSPSTDNDSIS. Ser416 is modified (phosphoserine). Over residues 419-428 the composition is skewed to polar residues; sequence KSTTEPIQLN. Residues 429 to 440 show a composition bias toward basic and acidic residues; sequence NKHDLHLRPGTY.

In terms of assembly, homotrimer.

It localises to the cytoplasm. In terms of biological role, capsid protein (CA) is the structural component of the virus-like particle (VLP), forming the shell that encapsulates the retrotransposons dimeric RNA genome. The particles are assembled from trimer-clustered units and there are holes in the capsid shells that allow for the diffusion of macromolecules. CA also has nucleocapsid-like chaperone activity, promoting primer tRNA(i)-Met annealing to the multipartite primer-binding site (PBS), dimerization of Ty1 RNA and initiation of reverse transcription. This chain is Transposon Ty1-LR2 Gag polyprotein (TY1A-LR2), found in Saccharomyces cerevisiae (strain ATCC 204508 / S288c) (Baker's yeast).